The following is a 459-amino-acid chain: Putrescine aminotransferase (459 aa).

Pyridoxal 5'-phosphate contacts are provided by residues 150–151 and Gln-274; that span reads GT. Position 300 is an N6-(pyridoxal phosphate)lysine (Lys-300). Residue Thr-332 participates in pyridoxal 5'-phosphate binding.

It belongs to the class-III pyridoxal-phosphate-dependent aminotransferase family. Putrescine aminotransferase subfamily. Pyridoxal 5'-phosphate serves as cofactor.

It catalyses the reaction an alkane-alpha,omega-diamine + 2-oxoglutarate = an omega-aminoaldehyde + L-glutamate. The catalysed reaction is putrescine + 2-oxoglutarate = 1-pyrroline + L-glutamate + H2O. The enzyme catalyses cadaverine + 2-oxoglutarate = 5-aminopentanal + L-glutamate. It participates in amine and polyamine degradation; putrescine degradation; 4-aminobutanal from putrescine (transaminase route): step 1/1. Functionally, catalyzes the aminotransferase reaction from putrescine to 2-oxoglutarate, leading to glutamate and 4-aminobutanal, which spontaneously cyclizes to form 1-pyrroline. This is the first step in one of two pathways for putrescine degradation, where putrescine is converted into 4-aminobutanoate (gamma-aminobutyrate or GABA) via 4-aminobutanal. Also functions as a cadaverine transaminase in a a L-lysine degradation pathway to succinate that proceeds via cadaverine, glutarate and L-2-hydroxyglutarate. The sequence is that of Putrescine aminotransferase from Shigella flexneri serotype 5b (strain 8401).